Reading from the N-terminus, the 478-residue chain is Vitronectin (478 aa).

An N-terminal signal peptide occupies residues 1-19 (MAPLRPLLILALLAWVALA). The SMB domain occupies 20-63 (DQESCKGRCTEGFNVDKKCQCDELCSYYQSCCTDYTAECKPQVT). Disulfide bonds link Cys-24–Cys-28, Cys-24–Cys-40, Cys-28–Cys-58, Cys-38–Cys-40, Cys-38–Cys-51, Cys-44–Cys-50, and Cys-51–Cys-58. The Cell attachment site motif lies at 64-66 (RGD). Thr-69 carries the post-translational modification Phosphothreonine; by CK2; in vitro. Tyr-75 bears the Sulfotyrosine mark. A Phosphothreonine; by CK2; in vitro modification is found at Thr-76. Tyr-78 bears the Sulfotyrosine mark. An N-linked (GlcNAc...) (complex) asparagine glycan is attached at Asn-86. The tract at residues 91-158 (EQVGGPSLTS…PPAEEELCSG (68 aa)) is disordered. Positions 97-112 (SLTSDLQAQSKGNPEQ) are enriched in polar residues. 2 positions are modified to phosphoserine: Ser-130 and Ser-137. A compositionally biased stretch (basic and acidic residues) spans 133–143 (EGIDSRPETLH). Hemopexin repeat units lie at residues 158-202 (GKPF…VWGI), 203-250 (EGPI…FDGI), and 251-305 (PDNV…FEHF). Residue Asn-169 is glycosylated (N-linked (GlcNAc...) asparagine). An N-linked (GlcNAc...) (complex) asparagine glycan is attached at Asn-242. Position 282 is a sulfotyrosine (Tyr-282). An intrachain disulfide couples Cys-293 to Cys-430. Ser-312 is subject to Phosphoserine. The interval 362 to 395 (RPSLAKKQRFRHRNRKGYRSQRGHSRGRNQNSRR) is heparin-binding. Residues 364-398 (SLAKKQRFRHRNRKGYRSQRGHSRGRNQNSRRPSR) are disordered. Residues 365-388 (LAKKQRFRHRNRKGYRSQRGHSRG) show a composition bias toward basic residues. At Ser-397 the chain carries Phosphoserine; by PKA. 2 positions are modified to sulfotyrosine: Tyr-417 and Tyr-420. The Hemopexin 4 repeat unit spans residues 419–472 (DYRMDWLVPATCEPIQSVFFFSGDKYYRVNLRTRRVDTVDPPYPRSIAQYWLGC).

In terms of assembly, exists in two forms: a single chain 75 kDa form (V75) and a clipped form composed of two chains (65 kDa and 10 kDa) (V65+V10) which are held together by a disulfide bond. Interacts with SERPINE1/PAI1, insulin and C1QBP. (Microbial infection) Interacts (via hemopexin repeat 2) with P.falciparum (isolate CDC / Honduras) SERA5 P47 (via C-terminus); may form heterotetramers of two VTN and SERA5 P47 heterodimers; the interaction may protect merozoites from phagocytosis by host monocytes; VTN glycosylation appears to be dispensable for the interaction. In terms of processing, sulfated on tyrosine residues. N- and O-glycosylated. Post-translationally, phosphorylation on Thr-69 and Thr-76 favors cell adhesion and spreading. In terms of processing, it has been suggested that the active SMB domain may be permitted considerable disulfide bond heterogeneity or variability, thus two alternate disulfide patterns based on 3D structures are described with 1 disulfide bond conserved in both. Phosphorylation sites are present in the extracellular medium. As to expression, expressed in the retina pigment epithelium (at protein level). Expressed in plasma (at protein level). Expressed in serum (at protein level).

The protein localises to the secreted. It is found in the extracellular space. Its subcellular location is the parasitophorous vacuole. In terms of biological role, vitronectin is a cell adhesion and spreading factor found in serum and tissues. Vitronectin interact with glycosaminoglycans and proteoglycans. Is recognized by certain members of the integrin family and serves as a cell-to-substrate adhesion molecule. Inhibitor of the membrane-damaging effect of the terminal cytolytic complement pathway. Somatomedin-B is a growth hormone-dependent serum factor with protease-inhibiting activity. The protein is Vitronectin (VTN) of Homo sapiens (Human).